Here is a 210-residue protein sequence, read N- to C-terminus: Probable GTP-binding protein EngB (210 aa).

The region spanning 25 to 199 is the EngB-type G domain; sequence TGIEVAFAGR…RQKLDTWFSE (175 aa). GTP is bound by residues 33–40, 60–64, 78–81, 145–148, and 178–180; these read GRSNAGKS, GRTQL, DLPG, TKAD, and FSS. Residues serine 40 and threonine 62 each contribute to the Mg(2+) site.

This sequence belongs to the TRAFAC class TrmE-Era-EngA-EngB-Septin-like GTPase superfamily. EngB GTPase family. Mg(2+) is required as a cofactor.

Necessary for normal cell division and for the maintenance of normal septation. The protein is Probable GTP-binding protein EngB of Shigella boydii serotype 4 (strain Sb227).